The primary structure comprises 698 residues: Polyribonucleotide nucleotidyltransferase (698 aa).

Asp485 and Asp491 together coordinate Mg(2+). One can recognise a KH domain in the interval 552–611; it reads PRITTIKINPEKIRDVIGKGGAVIRALTEETGTTIELDDNGTVKIASSNGEATKEAIRRI. One can recognise an S1 motif domain in the interval 621 to 689; it reads GRIYNGKVIR…RQGRVRLSIK (69 aa).

It belongs to the polyribonucleotide nucleotidyltransferase family. Component of the RNA degradosome, which is a multiprotein complex involved in RNA processing and mRNA degradation. Mg(2+) is required as a cofactor.

Its subcellular location is the cytoplasm. The catalysed reaction is RNA(n+1) + phosphate = RNA(n) + a ribonucleoside 5'-diphosphate. Functionally, involved in mRNA degradation. Catalyzes the phosphorolysis of single-stranded polyribonucleotides processively in the 3'- to 5'-direction. This Shewanella frigidimarina (strain NCIMB 400) protein is Polyribonucleotide nucleotidyltransferase.